Here is a 351-residue protein sequence, read N- to C-terminus: Cytoplasmic dynein 2 light intermediate chain 1 (351 aa).

Residues 304–351 (TLKDVKDPAKDPQYAESEVDEMRIQKDQELEQYKRSSSKSWKQIELDS) are disordered. The span at 323–337 (DEMRIQKDQELEQYK) shows a compositional bias: basic and acidic residues.

It belongs to the dynein light intermediate chain family. In terms of assembly, light intermediate chain of the cytoplasmic dynein complex 2, a multisubunit complex composed at least of eleven different proteins. The cytoplasmic dynein 2 complex consists of two catalytic heavy chains (HCs) and a number of non-catalytic subunits presented by intermediate chains (ICs), light intermediate chains (LICs) and light chains (LCs). Among them, a heavy chain (DYNC2H1), two intermediate chains (DYNC2I2 and DYNC2I1), a light intermediate chain (DYNC2LI1), and a light chain (DYNLT2B) are unique to the dynein-2 complex, but a subset of light chains are also shared by dynein-1 and dynein-2 complexes. Dynein-2 complex is built around two copies of cytoplasmic dynein 2 heavy chain 1 (DYNC2H1). The C-terminal region forms the motor domain, which converts the energy from ATP hydrolysis into movement. Its N-terminal region forms the tail, an extended structure that binds the other subunits and holds the two heavy chains in a homodimer. Interacts with DYNC2H1 (via N-terminus); this interaction stabilizes the dynein-2 complex structure.

The protein localises to the cytoplasm. The protein resides in the cell projection. It localises to the cilium. It is found in the cytoskeleton. Its subcellular location is the cilium basal body. The protein localises to the cilium axoneme. The protein resides in the microtubule organizing center. It localises to the centrosome. Functionally, acts as one of several non-catalytic accessory components of the cytoplasmic dynein 2 complex (dynein-2 complex), a motor protein complex that drives the movement of cargos along microtubules within cilia and flagella in concert with the intraflagellar transport (IFT) system, facilitating the assembly of these organelles. Involved in the regulation of ciliary length. This Bos taurus (Bovine) protein is Cytoplasmic dynein 2 light intermediate chain 1 (DYNC2LI1).